The following is a 589-amino-acid chain: Serine/threonine-protein kinase shk2 (589 aa).

One can recognise a PH domain in the interval 23–125 (GIIRSGWVML…WMDLISSRAL (103 aa)). One can recognise a CRIB domain in the interval 129–142 (VSSPMNPKHQVHVG). The Protein kinase domain maps to 309-566 (FNVKHKLGQG…AAELLTHSFL (258 aa)). Residues 315 to 323 (LGQGASGSV) and Lys-343 contribute to the ATP site. Asp-434 serves as the catalytic Proton acceptor.

Belongs to the protein kinase superfamily. STE Ser/Thr protein kinase family. STE20 subfamily.

The enzyme catalyses L-seryl-[protein] + ATP = O-phospho-L-seryl-[protein] + ADP + H(+). It carries out the reaction L-threonyl-[protein] + ATP = O-phospho-L-threonyl-[protein] + ADP + H(+). Its function is as follows. Forms an activated complex with GTP-bound Ras-like cdc42. Participates in Ras-dependent morphological control and mating response pathways. The sequence is that of Serine/threonine-protein kinase shk2 (shk2) from Schizosaccharomyces pombe (strain 972 / ATCC 24843) (Fission yeast).